We begin with the raw amino-acid sequence, 290 residues long: Shikimate dehydrogenase (NADP(+)) (290 aa).

Residues 24 to 26 (SKS) and threonine 71 each bind shikimate. The active-site Proton acceptor is the lysine 75. The shikimate site is built by asparagine 96 and aspartate 111. NADP(+)-binding positions include 135 to 139 (GAGGA), 159 to 164 (NRTKQR), and isoleucine 228. Tyrosine 230 is a binding site for shikimate. Position 251 (glycine 251) interacts with NADP(+).

This sequence belongs to the shikimate dehydrogenase family. As to quaternary structure, homodimer.

It catalyses the reaction shikimate + NADP(+) = 3-dehydroshikimate + NADPH + H(+). Its pathway is metabolic intermediate biosynthesis; chorismate biosynthesis; chorismate from D-erythrose 4-phosphate and phosphoenolpyruvate: step 4/7. Involved in the biosynthesis of the chorismate, which leads to the biosynthesis of aromatic amino acids. Catalyzes the reversible NADPH linked reduction of 3-dehydroshikimate (DHSA) to yield shikimate (SA). The chain is Shikimate dehydrogenase (NADP(+)) from Bartonella tribocorum (strain CIP 105476 / IBS 506).